The chain runs to 431 residues: Mediator of RNA polymerase II transcription subunit 2 (431 aa).

Ser-6 carries the phosphoserine modification. Over residues 105–140 (GKEKEKEREEAEKKRAEQENMRKVREQEELKKRQEL) the composition is skewed to basic and acidic residues. Residues 105–178 (GKEKEKEREE…ANTTDANGSK (74 aa)) form a disordered region. The span at 143-152 (ASQQQQLQQN) shows a compositional bias: low complexity. Residues 162–178 (NFSTTAPANTTDANGSK) show a composition bias toward polar residues. Ser-208 carries the post-translational modification Phosphoserine; by CDK8. The segment at 284–399 (NNINSTKNGK…GDNPPPADNG (116 aa)) is disordered. Basic and acidic residues predominate over residues 304–313 (NGDEKNKNNN). The segment covering 318–365 (NNNNSSEKNNNNNNNNNNNNDDNGNNNNNNSGNDNNNTTNNDSNNKNN) has biased composition (low complexity). Residues 366-387 (SITTGNDNENIVNNDLPTTVVS) are compositionally biased toward polar residues.

It belongs to the mediator complex subunit 2 family. Component of the Mediator complex, which is composed of at least 21 subunits that form three structurally distinct submodules. The Mediator head module contains MED6, MED8, MED11, SRB4/MED17, SRB5/MED18, ROX3/MED19, SRB2/MED20 and SRB6/MED22, the middle module contains MED1, MED4, NUT1/MED5, MED7, CSE2/MED9, NUT2/MED10, SRB7/MED21 and SOH1/MED31, and the tail module contains MED2, PGD1/MED3, RGR1/MED14, GAL11/MED15 and SIN4/MED16. The head and the middle modules interact directly with RNA polymerase II, whereas the elongated tail module interacts with gene-specific regulatory proteins.

The protein localises to the nucleus. In terms of biological role, component of the Mediator complex, a coactivator involved in the regulated transcription of nearly all RNA polymerase II-dependent genes. Mediator functions as a bridge to convey information from gene-specific regulatory proteins to the basal RNA polymerase II transcription machinery. The Mediator complex, having a compact conformation in its free form, is recruited to promoters by direct interactions with regulatory proteins and serves for the assembly of a functional preinitiation complex with RNA polymerase II and the general transcription factors. The Mediator complex unfolds to an extended conformation and partially surrounds RNA polymerase II, specifically interacting with the unphosphorylated form of the C-terminal domain (CTD) of RNA polymerase II. The Mediator complex dissociates from the RNA polymerase II holoenzyme and stays at the promoter when transcriptional elongation begins. The protein is Mediator of RNA polymerase II transcription subunit 2 (MED2) of Saccharomyces cerevisiae (strain ATCC 204508 / S288c) (Baker's yeast).